The chain runs to 612 residues: MENQLTKSVEERTFQYQDSLPSLPVPALEESLKKYLESVKPFANEDEYKKTEEIVQKFQEGAGKRLHQKLLERARGKRNWLEEWWLNVAYLDVRIPSQLNVNFVGPCPHFEHYWPAREGTQLERGSMMLWHNLNYWQLLRREKLPVHKSGNTPLDMNQFRMLFSTCKVPGITRDSIMNYFKTESEGHCPTHIAVLCRGRAFVFDVLHEGCLITPPELLRQLTYIHKKCSNEPVGPSIAALTSEERTRWAKAREYLISLDPENLTLLEKIQTSLFVYSIEDSSPHATPEEYSQVFEMLLGGDPSVRWGDKSYNLISFANGIFGCCCDHAPYDAMVMVNIAHYVDERVLETEGRWKGSEKVRDIPLPEELVFTVDEKILNDVSQAKAQHLKAASDLQIAASTFTSFGKKLTKEEALHPDTFIQLALQLAYYRLHGRPGCCYETAMTRYFYHGRTETVRSCTVEAVRWCQSMQDPSASLLERQQKMLEAFAKHNKMMKDCSHGKGFDRHLLGLLLIAKEEGLPVPELFEDPLFSRSGGGGNFVLSTSLVGYLRVQGVVVPMVHNGYGFFYHIRDDRFVVACSSWRSCPETDAEKLVQMIFHAFHDMIQLMNTAHL.

An N-acetylmethionine modification is found at Met1. N6-succinyllysine occurs at positions 40 and 57. The active-site Proton acceptor is the His327. Residues Lys406 and 410-417 (KEEALHPD) contribute to the CoA site. Lys406 is modified (N6-acetyllysine; alternate). Position 406 is an N6-succinyllysine; alternate (Lys406). Positions 439, 441, and 452 each coordinate (R)-carnitine. The short motif at 610 to 612 (AHL) is the Microbody targeting signal element.

It belongs to the carnitine/choline acetyltransferase family.

It is found in the peroxisome. The enzyme catalyses octanoyl-CoA + (R)-carnitine = O-octanoyl-(R)-carnitine + CoA. The catalysed reaction is 4,8-dimethylnonanoyl-CoA + (R)-carnitine = O-4,8-dimethylnonanoyl-(R)-carnitine + CoA. It participates in lipid metabolism; fatty acid beta-oxidation. Functionally, beta-oxidation of fatty acids. The highest activity concerns the C6 to C10 chain length substrate. The protein is Peroxisomal carnitine O-octanoyltransferase (Crot) of Mus musculus (Mouse).